Reading from the N-terminus, the 489-residue chain is Glutamyl-tRNA(Gln) amidotransferase subunit A (489 aa).

Active-site charge relay system residues include lysine 79 and serine 158. Serine 182 serves as the catalytic Acyl-ester intermediate.

It belongs to the amidase family. GatA subfamily. Heterotrimer of A, B and C subunits.

It catalyses the reaction L-glutamyl-tRNA(Gln) + L-glutamine + ATP + H2O = L-glutaminyl-tRNA(Gln) + L-glutamate + ADP + phosphate + H(+). Allows the formation of correctly charged Gln-tRNA(Gln) through the transamidation of misacylated Glu-tRNA(Gln) in organisms which lack glutaminyl-tRNA synthetase. The reaction takes place in the presence of glutamine and ATP through an activated gamma-phospho-Glu-tRNA(Gln). This is Glutamyl-tRNA(Gln) amidotransferase subunit A from Anaplasma marginale (strain Florida).